The sequence spans 375 residues: 23S rRNA (uracil(747)-C(5))-methyltransferase RlmC (375 aa).

Residues Cys3, Cys11, Cys14, and Cys87 each coordinate [4Fe-4S] cluster. S-adenosyl-L-methionine contacts are provided by Gln212, Phe241, Glu262, and Asn307. The active-site Nucleophile is the Cys334.

The protein belongs to the class I-like SAM-binding methyltransferase superfamily. RNA M5U methyltransferase family. RlmC subfamily.

The enzyme catalyses uridine(747) in 23S rRNA + S-adenosyl-L-methionine = 5-methyluridine(747) in 23S rRNA + S-adenosyl-L-homocysteine + H(+). Catalyzes the formation of 5-methyl-uridine at position 747 (m5U747) in 23S rRNA. The chain is 23S rRNA (uracil(747)-C(5))-methyltransferase RlmC from Shigella dysenteriae serotype 1 (strain Sd197).